The primary structure comprises 1196 residues: Phosphatidylinositol-3,5-bisphosphate 3-phosphatase MTMR3 (1196 aa).

Serine 8 carries the post-translational modification Phosphoserine. The Myotubularin phosphatase domain maps to 155–576 (EHVTSRFKNE…RNLMLWSAVY (422 aa)). Asparagine 326, asparagine 351, and isoleucine 352 together coordinate a 1,2-diacyl-sn-glycero-3-phospho-(1D-myo-inositol-3,5-bisphosphate). Residues asparagine 326, asparagine 351, and isoleucine 352 each contribute to the a 1,2-diacyl-sn-glycero-3-phospho-(1D-myo-inositol-3-phosphate) site. Residue cysteine 413 is the Phosphocysteine intermediate of the active site. Residues serine 414, aspartate 415, glycine 416, tryptophan 417, aspartate 418, arginine 419, lysine 455, and arginine 459 each coordinate a 1,2-diacyl-sn-glycero-3-phospho-(1D-myo-inositol-3,5-bisphosphate). Positions 414, 415, 416, 417, 418, and 419 each coordinate a 1,2-diacyl-sn-glycero-3-phospho-(1D-myo-inositol-3-phosphate). Arginine 459 serves as a coordination point for a 1,2-diacyl-sn-glycero-3-phospho-(1D-myo-inositol-3-phosphate). Residues 587–612 (DDSCAPYPVPGTSPDEPPLSRLPKTR) form a disordered region. Residues 593–603 (YPVPGTSPDEP) are compositionally biased toward pro residues. Phosphoserine is present on residues serine 613, serine 633, serine 647, and serine 651. Disordered stretches follow at residues 697–719 (TKEE…EVKE) and 855–900 (ESGP…HRTS). Serine 907 is subject to Phosphoserine. Residues 993 to 1008 (NSHSGRPSTTSSPDQP) show a composition bias toward polar residues. Residues 993-1019 (NSHSGRPSTTSSPDQPSRSHLDDDGMP) are disordered. Residues 1027 to 1060 (QRLRQIESGHQQEVETLKKQVQELKSRLESQYLT) adopt a coiled-coil conformation. Serine 1062 carries the post-translational modification Phosphoserine. The FYVE-type zinc finger occupies 1117 to 1177 (DHLAAHCYAC…VCKSCYSSLH (61 aa)). Residues cysteine 1123, cysteine 1126, cysteine 1139, cysteine 1142, cysteine 1147, cysteine 1150, cysteine 1169, and cysteine 1172 each contribute to the Zn(2+) site.

This sequence belongs to the protein-tyrosine phosphatase family. Non-receptor class myotubularin subfamily. In terms of assembly, forms heterodimers with MTMR4 that recruit both CEP55 and PLK1; occurs during early mitosis, regulates the phosphorylation of CEP55 by PLK1 and its recruitment to the midbody where it mediates cell abscission.

The protein localises to the cytoplasm. It is found in the cytosol. It localises to the membrane. It carries out the reaction a 1,2-diacyl-sn-glycero-3-phospho-(1D-myo-inositol-3,5-bisphosphate) + H2O = a 1,2-diacyl-sn-glycero-3-phospho-(1D-myo-inositol-5-phosphate) + phosphate. The enzyme catalyses a 1,2-diacyl-sn-glycero-3-phospho-(1D-myo-inositol-3-phosphate) + H2O = a 1,2-diacyl-sn-glycero-3-phospho-(1D-myo-inositol) + phosphate. The catalysed reaction is 1,2-dihexadecanoyl-sn-glycero-3-phospho-(1D-myo-inositol-3-phosphate) + H2O = 1,2-dihexadecanoyl-sn-glycero-3-phospho-(1D-myo-inositol) + phosphate. It catalyses the reaction 1,2-dioctanoyl-sn-glycero-3-phospho-(1-D-myo-inositol-3-phosphate) + H2O = 1,2-dioctanoyl-sn-glycero-3-phospho-(1D-myo-inositol) + phosphate. It carries out the reaction 1,2-dihexadecanoyl-sn-glycero-3-phospho-(1D-myo-inositol-3,5-phosphate) + H2O = 1,2-dihexadecanoyl-sn-glycero-3-phospho-(1D-myo-inositol-5-phosphate) + phosphate. Lipid phosphatase that specifically dephosphorylates the D-3 position of phosphatidylinositol 3-phosphate and phosphatidylinositol 3,5-bisphosphate, generating phosphatidylinositol and phosphatidylinositol 5-phosphate. Decreases the levels of phosphatidylinositol 3-phosphate, a phospholipid found in cell membranes where it acts as key regulator of both cell signaling and intracellular membrane traffic. Could also have a molecular sequestering/adapter activity and regulate biological processes independently of its phosphatase activity. It includes the regulation of midbody abscission during mitotic cytokinesis. This Mus musculus (Mouse) protein is Phosphatidylinositol-3,5-bisphosphate 3-phosphatase MTMR3.